The following is a 215-amino-acid chain: Cytochrome b6 (215 aa).

A helical membrane pass occupies residues isoleucine 32–phenylalanine 52. Cysteine 35 contributes to the heme c binding site. Histidine 86 and histidine 100 together coordinate heme b. Helical transmembrane passes span alanine 90–phenylalanine 110, leucine 116–tyrosine 136, and leucine 186–isoleucine 206. Heme b contacts are provided by histidine 187 and histidine 202.

It belongs to the cytochrome b family. PetB subfamily. In terms of assembly, the 4 large subunits of the cytochrome b6-f complex are cytochrome b6, subunit IV (17 kDa polypeptide, PetD), cytochrome f and the Rieske protein, while the 4 small subunits are PetG, PetL, PetM and PetN. The complex functions as a dimer. Heme b serves as cofactor. It depends on heme c as a cofactor.

Its subcellular location is the plastid. It is found in the chloroplast thylakoid membrane. In terms of biological role, component of the cytochrome b6-f complex, which mediates electron transfer between photosystem II (PSII) and photosystem I (PSI), cyclic electron flow around PSI, and state transitions. This Lactuca sativa (Garden lettuce) protein is Cytochrome b6.